Consider the following 329-residue polypeptide: Probable cell division protein WhiA (329 aa).

The segment at residues 276–309 (SLEELGKVHEPPLTKDAIAGRIRRLLALADKTAR) is a DNA-binding region (H-T-H motif). The interval 308–329 (ARSNGEPTTLESLPVEMRDDRG) is disordered. The segment covering 309-318 (RSNGEPTTLE) has biased composition (polar residues).

The protein belongs to the WhiA family.

Functionally, involved in cell division and chromosome segregation. This chain is Probable cell division protein WhiA, found in Cutibacterium acnes (strain DSM 16379 / KPA171202) (Propionibacterium acnes).